The primary structure comprises 120 residues: Large ribosomal subunit protein bL19 (120 aa).

This sequence belongs to the bacterial ribosomal protein bL19 family.

Its function is as follows. This protein is located at the 30S-50S ribosomal subunit interface and may play a role in the structure and function of the aminoacyl-tRNA binding site. The chain is Large ribosomal subunit protein bL19 from Cyanothece sp. (strain PCC 7425 / ATCC 29141).